The primary structure comprises 323 residues: tRNA U34 carboxymethyltransferase (323 aa).

Carboxy-S-adenosyl-L-methionine-binding positions include Lys91, Trp105, Lys110, Gly130, Ile180 to Glu181, Met196, Tyr200, and Arg315.

This sequence belongs to the class I-like SAM-binding methyltransferase superfamily. CmoB family. Homotetramer.

The enzyme catalyses carboxy-S-adenosyl-L-methionine + 5-hydroxyuridine(34) in tRNA = 5-carboxymethoxyuridine(34) in tRNA + S-adenosyl-L-homocysteine + H(+). Catalyzes carboxymethyl transfer from carboxy-S-adenosyl-L-methionine (Cx-SAM) to 5-hydroxyuridine (ho5U) to form 5-carboxymethoxyuridine (cmo5U) at position 34 in tRNAs. The sequence is that of tRNA U34 carboxymethyltransferase from Citrifermentans bemidjiense (strain ATCC BAA-1014 / DSM 16622 / JCM 12645 / Bem) (Geobacter bemidjiensis).